A 184-amino-acid polypeptide reads, in one-letter code: Photosystem I assembly protein Ycf4 (184 aa).

The next 2 membrane-spanning stretches (helical) occupy residues 22–42 (FFWA…GTSS) and 57–77 (IPFF…LFIS).

It belongs to the Ycf4 family.

Its subcellular location is the plastid. The protein resides in the chloroplast thylakoid membrane. Its function is as follows. Seems to be required for the assembly of the photosystem I complex. The polypeptide is Photosystem I assembly protein Ycf4 (Ceratophyllum demersum (Rigid hornwort)).